The following is a 381-amino-acid chain: Sulfate adenylyltransferase (381 aa).

Belongs to the sulfate adenylyltransferase family.

The catalysed reaction is sulfate + ATP + H(+) = adenosine 5'-phosphosulfate + diphosphate. Its pathway is sulfur metabolism; hydrogen sulfide biosynthesis; sulfite from sulfate: step 1/3. This chain is Sulfate adenylyltransferase, found in Carboxydothermus hydrogenoformans (strain ATCC BAA-161 / DSM 6008 / Z-2901).